The sequence spans 176 residues: Peroxiredoxin AHP1 (176 aa).

At Ser-2 the chain carries N-acetylserine. The Thioredoxin domain maps to 9–176 (FPAGDYKFQY…SSVESVLAHL (168 aa)). Ser-28 carries the phosphoserine modification. Lys-32 is covalently cross-linked (Glycyl lysine isopeptide (Lys-Gly) (interchain with G-Cter in URM1)). Lys-48 is covalently cross-linked (Glycyl lysine isopeptide (Lys-Gly) (interchain with G-Cter in ubiquitin); alternate). Residue Lys-48 forms a Glycyl lysine isopeptide (Lys-Gly) (interchain with G-Cter in URM1); alternate linkage. Residue Ser-59 is modified to Phosphoserine. Cys-62 functions as the Cysteine sulfenic acid (-SOH) intermediate in the catalytic mechanism. The residue at position 62 (Cys-62) is a Cysteine persulfide. A Glycyl lysine isopeptide (Lys-Gly) (interchain with G-Cter in URM1) cross-link involves residue Lys-79. Lys-81 participates in a covalent cross-link: Glycyl lysine isopeptide (Lys-Gly) (interchain with G-Cter in ubiquitin); alternate. Lys-81 participates in a covalent cross-link: Glycyl lysine isopeptide (Lys-Gly) (interchain with G-Cter in URM1); alternate. Residue Lys-107 forms a Glycyl lysine isopeptide (Lys-Gly) (interchain with G-Cter in URM1) linkage. Residue Lys-113 forms a Glycyl lysine isopeptide (Lys-Gly) (interchain with G-Cter in ubiquitin) linkage. At Ser-116 the chain carries Phosphoserine. A Cysteine persulfide modification is found at Cys-120. A Glycyl lysine isopeptide (Lys-Gly) (interchain with G-Cter in URM1) cross-link involves residue Lys-124. Residue Lys-156 forms a Glycyl lysine isopeptide (Lys-Gly) (interchain with G-Cter in URM1); alternate linkage. A Glycyl lysine isopeptide (Lys-Gly) (interchain with G-Cter in SUMO); alternate cross-link involves residue Lys-156.

The protein belongs to the peroxiredoxin family. Prx5 subfamily. In terms of assembly, homodimer; disulfide-linked, upon oxidation. Post-translationally, conjugated to URM1, a ubiquitin-like protein, in response to oxidative stresses. The attachment of URM1 to lysine residues exclusively depends on the presence of a peroxidatic cysteine in the target protein, with low specificity for the particular residue, motif, or structural context at which urmylation can occur. The URM1-conjugation reaction is mechanistically and directly coupled to the process of cysteine persulfidation, transfering the sulfur atom of the URM1 thiocarboxyl group to redox-active cysteine residues in the target protein if it is exposed to oxidative conditions. Persulfidated on specific redox-active cysteine residues. Persulfidation (also called protein S-sulfhydration) may provide a molecular mechanism that enables cells to protect vulnerable cysteine residues from reactive oxygen species (ROS) under stress conditions.

It localises to the cytoplasm. It carries out the reaction a hydroperoxide + [thioredoxin]-dithiol = an alcohol + [thioredoxin]-disulfide + H2O. Functionally, thiol-specific peroxidase that catalyzes the reduction of hydrogen peroxide and organic hydroperoxides to water and alcohols, respectively. Plays a role in cell protection against oxidative stress by detoxifying peroxides and as sensor of hydrogen peroxide-mediated signaling events. Preferentially eliminates organic peroxides rather than hydrogen peroxide. Relays alkyl hydroperoxides as a signal to the transcription factor CAD1/YAP2 by inducing the formation of intramolecular disulfide bonds in CAD1, which causes its nuclear accumulation and activation. Involved in cellular Mn(2+) homeostasis. This chain is Peroxiredoxin AHP1, found in Saccharomyces cerevisiae (strain ATCC 204508 / S288c) (Baker's yeast).